We begin with the raw amino-acid sequence, 607 residues long: UvrABC system protein C (607 aa).

The GIY-YIG domain occupies 19–97 (TLSGVYQMRD…IKQYQPKFNI (79 aa)). The region spanning 205 to 240 (EHLLQTLTEHMLQASAAQQYERAAIVRDQISELRTI) is the UVR domain.

This sequence belongs to the UvrC family. As to quaternary structure, interacts with UvrB in an incision complex.

The protein localises to the cytoplasm. Functionally, the UvrABC repair system catalyzes the recognition and processing of DNA lesions. UvrC both incises the 5' and 3' sides of the lesion. The N-terminal half is responsible for the 3' incision and the C-terminal half is responsible for the 5' incision. This Dichelobacter nodosus (strain VCS1703A) protein is UvrABC system protein C.